A 524-amino-acid chain; its full sequence is Light-independent protochlorophyllide reductase subunit B (524 aa).

Asp-36 lines the [4Fe-4S] cluster pocket. The active-site Proton donor is Asp-290. Residue 425 to 426 coordinates substrate; the sequence is GL.

It belongs to the ChlB/BchB/BchZ family. Protochlorophyllide reductase is composed of three subunits; ChlL, ChlN and ChlB. Forms a heterotetramer of two ChlB and two ChlN subunits. Requires [4Fe-4S] cluster as cofactor.

It carries out the reaction chlorophyllide a + oxidized 2[4Fe-4S]-[ferredoxin] + 2 ADP + 2 phosphate = protochlorophyllide a + reduced 2[4Fe-4S]-[ferredoxin] + 2 ATP + 2 H2O. The protein operates within porphyrin-containing compound metabolism; chlorophyll biosynthesis (light-independent). Functionally, component of the dark-operative protochlorophyllide reductase (DPOR) that uses Mg-ATP and reduced ferredoxin to reduce ring D of protochlorophyllide (Pchlide) to form chlorophyllide a (Chlide). This reaction is light-independent. The NB-protein (ChlN-ChlB) is the catalytic component of the complex. The protein is Light-independent protochlorophyllide reductase subunit B of Parasynechococcus marenigrum (strain WH8102).